The sequence spans 873 residues: Inner centromere protein A (873 aa).

7 disordered regions span residues 50 to 124 (AEPE…KRMT), 237 to 270 (PANE…VVRK), 282 to 452 (FSLA…PPPH), 484 to 535 (KRNT…KVRR), 566 to 649 (QIDE…LAEQ), 683 to 736 (LERA…EQAA), and 781 to 800 (DLNS…PIPA). Residues 60–69 (SQKRRRKKRT) are compositionally biased toward basic residues. Residues 87-105 (RQSNASWSSSVRRLSVRNQ) are compositionally biased toward low complexity. The span at 239 to 254 (NEQQLNLSNQSATPTG) shows a compositional bias: polar residues. The segment covering 261–270 (SVRRSLVVRK) has biased composition (basic residues). The span at 286–297 (SKRESMTREAVR) shows a compositional bias: basic and acidic residues. Residues 314-325 (SSTSSQRSYQSS) are compositionally biased toward low complexity. Positions 437-452 (PSPPCPPSKIVRPPPH) are enriched in pro residues. Basic and acidic residues-rich tracts occupy residues 491–535 (TDPK…KVRR), 566–584 (QIDE…EEKA), 591–649 (KKQE…LAEQ), and 683–733 (LERA…KAKE). The SAH stretch occupies residues 494–707 (KTEEKERQRL…EERKKREQQE (214 aa)). Positions 782 to 856 (LNSDDSTDDE…RTSSAVWHSP (75 aa)) are IN box. A phosphoserine mark is found at Ser849 and Ser850.

It belongs to the INCENP family. In terms of assembly, component of the CPC composed of survivin/birc5, incenp, cdca8/borealin and/or cdca9/dasra-A, and aurkb/aurora-B. Interacts (via C-terminus) with aurkb (via N-terminus and kinase domain). Interacts (via N-terminus) with birc5.1, birc5.2, cdca8 and cdca9. Interacts with mtus1.

It localises to the nucleus. The protein localises to the chromosome. It is found in the centromere. The protein resides in the cytoplasm. Its subcellular location is the cytoskeleton. It localises to the spindle. The protein localises to the midbody. It is found in the kinetochore. Component of the chromosomal passenger complex (CPC), a complex that acts as a key regulator of mitosis. The CPC complex has essential functions at the centromere in ensuring correct chromosome alignment and segregation and is required for chromatin-induced microtubule stabilization and spindle assembly. Acts as a scaffold regulating CPC localization and activity. The C-terminus associates with aurkb/aurora-B, the N-terminus associated with cdca8/borealin and/or cdca9/dasra-A tethers the CPC to the inner centromere, and the microtubule binding activity within the central SAH domain directs aurkb/aurora-B toward substrates near microtubules. Activates aurkb. This Xenopus laevis (African clawed frog) protein is Inner centromere protein A (incenp-a).